A 111-amino-acid chain; its full sequence is Universal stress protein B (111 aa).

The next 2 membrane-spanning stretches (helical) occupy residues 1–21 (MIST…NMAR) and 90–110 (FLLT…MMMW).

It belongs to the universal stress protein B family.

The protein localises to the cell inner membrane. In Pectobacterium atrosepticum (strain SCRI 1043 / ATCC BAA-672) (Erwinia carotovora subsp. atroseptica), this protein is Universal stress protein B.